The chain runs to 570 residues: MSYRMNRRTYAETFGPTVGDRVRLADTELFIQVEKDYTTYGDEVKFGGGKVIRDGMGQSPISREGGAVDLVITNALILDWWGVVKADIGIKDGKIHKIGKAGNPYIQDRVDIIIGPSTEIIAGEGHIITAGGIDSHIHFICPQQIEIAIASGITTMIGGGTGPATGTNATTCTPGQWNIWMMLQAADAFPMNLGFLGKGNSAKPEGLIEQIKAGAMGLKLHEDWGTTPAAIDTCLSVADEYDVQVAIHTDTLNEAGFVENTIAAFKDRVIHTYHTEGAGGGHAPDIIKVCALKNVLPSSTNPTRPFTVNTLEEHLDMLMVCHHLDKNIPEDVAFAESRIRKETIAAEDILHDLGAFSAIASDSQAMGRVGEVIIRTWQTAHKMKVQRGILASEKKEVADNFRAKRYIAKYTINPAIMHGIADYVGSIEAGKLADICLWKPAMFGVKPEIVIKGGAIAWAQMGDPNASIPTPQPVYMRPMFGSFGGATSSTSLTFVSQEALDAEIPKKINLKTPAVAVSNTRNISKADMKLNEATPKIEVNPETYEVRADGELLTCEPAYVLPMTQRYFLF.

The region spanning 131 to 570 is the Urease domain; the sequence is GGIDSHIHFI…LPMTQRYFLF (440 aa). Residues histidine 136, histidine 138, and lysine 219 each coordinate Ni(2+). N6-carboxylysine is present on lysine 219. Substrate is bound at residue histidine 221. Ni(2+) contacts are provided by histidine 248 and histidine 274. Histidine 322 (proton donor) is an active-site residue. Residue aspartate 362 coordinates Ni(2+).

Belongs to the metallo-dependent hydrolases superfamily. Urease alpha subunit family. In terms of assembly, heterotrimer of UreA (gamma), UreB (beta) and UreC (alpha) subunits. Three heterotrimers associate to form the active enzyme. It depends on Ni cation as a cofactor. In terms of processing, carboxylation allows a single lysine to coordinate two nickel ions.

The protein localises to the cytoplasm. The catalysed reaction is urea + 2 H2O + H(+) = hydrogencarbonate + 2 NH4(+). It functions in the pathway nitrogen metabolism; urea degradation; CO(2) and NH(3) from urea (urease route): step 1/1. This is Urease subunit alpha from Trichodesmium erythraeum (strain IMS101).